We begin with the raw amino-acid sequence, 102 residues long: Large ribosomal subunit protein bL21 (102 aa).

It belongs to the bacterial ribosomal protein bL21 family. In terms of assembly, part of the 50S ribosomal subunit. Contacts protein L20.

Functionally, this protein binds to 23S rRNA in the presence of protein L20. This Lawsonia intracellularis protein is Large ribosomal subunit protein bL21.